Here is a 427-residue protein sequence, read N- to C-terminus: Serine hydroxymethyltransferase (427 aa).

120 to 122 (GHI) serves as a coordination point for (6S)-5,6,7,8-tetrahydrofolate. N6-(pyridoxal phosphate)lysine is present on Lys226.

The protein belongs to the SHMT family. Homodimer. Requires pyridoxal 5'-phosphate as cofactor.

It localises to the cytoplasm. It participates in amino-acid biosynthesis; glycine biosynthesis; glycine from L-serine: step 1/1. Its function is as follows. Catalyzes the reversible interconversion of serine and glycine with a modified folate serving as the one-carbon carrier. Also exhibits a pteridine-independent aldolase activity toward beta-hydroxyamino acids, producing glycine and aldehydes, via a retro-aldol mechanism. This Pyrococcus horikoshii (strain ATCC 700860 / DSM 12428 / JCM 9974 / NBRC 100139 / OT-3) protein is Serine hydroxymethyltransferase.